We begin with the raw amino-acid sequence, 428 residues long: MKKKLNLCPKGTYDFFGQSAKIFIDVRKVFFDQAKKFNFSYIETPIFEYANIFLTTNQIADIVSKELYKFFDKSGRELALRPEGTAPIMRSVAQHKLFQTEKKFFYFGPMFRYENPQKGRFRQFYQAGFEIINYKKDSLEFQILEIIVLIKSIFKDLGINEYELKINFLSNLTTRNIYEKNLAQYFEKFSDKLEPISKIRIKKNPLRILDDKIEQEKEFVKLAPKINTFWTMEDKNIFNRITSILEEFKISYKVDYNLVRGLDYYDDFVFEFIDTSQTLGTKLALVGGGCYNNLPTKFGLNNFKSIGMAFGIERLIEIIKSKKNIKEQNLDFFLLSFTDKEILLNFKLAKILRKENFLVDLNKTPFSVSKGFQLAKKSGAKFVFFFEKNQAKNYISLKNLQTGKNEQILYTEINFEYLNSIIKASENA.

It belongs to the class-II aminoacyl-tRNA synthetase family. As to quaternary structure, homodimer.

It is found in the cytoplasm. It catalyses the reaction tRNA(His) + L-histidine + ATP = L-histidyl-tRNA(His) + AMP + diphosphate + H(+). This is Histidine--tRNA ligase from Mesomycoplasma hyopneumoniae (strain 7448) (Mycoplasma hyopneumoniae).